We begin with the raw amino-acid sequence, 1234 residues long: ATP-dependent helicase/nuclease subunit A (1234 aa).

The 474-residue stretch at 9-482 (STWTDDQWEA…IDLNKNFRSR (474 aa)) folds into the UvrD-like helicase ATP-binding domain. 30-37 (AAAGSGKT) contributes to the ATP binding site. One can recognise a UvrD-like helicase C-terminal domain in the interval 509–800 (QAELKLGASY…RMMTIHSSKG (292 aa)).

The protein belongs to the helicase family. AddA subfamily. As to quaternary structure, heterodimer of AddA and AddB/RexB. Requires Mg(2+) as cofactor.

The enzyme catalyses Couples ATP hydrolysis with the unwinding of duplex DNA by translocating in the 3'-5' direction.. The catalysed reaction is ATP + H2O = ADP + phosphate + H(+). In terms of biological role, the heterodimer acts as both an ATP-dependent DNA helicase and an ATP-dependent, dual-direction single-stranded exonuclease. Recognizes the chi site generating a DNA molecule suitable for the initiation of homologous recombination. The AddA nuclease domain is required for chi fragment generation; this subunit has the helicase and 3' -&gt; 5' nuclease activities. The sequence is that of ATP-dependent helicase/nuclease subunit A from Bacillus pumilus (strain SAFR-032).